Consider the following 309-residue polypeptide: Olfactory receptor 1L8 (309 aa).

Over 1–26 (MERINHTSSVSEFILLGLSSRPEDQK) the chain is Extracellular. Residue asparagine 5 is glycosylated (N-linked (GlcNAc...) asparagine). Residues 27–50 (TLFVLFLIVYLVTITGNLLIILAI) traverse the membrane as a helical segment. Over 51-58 (RFNPHLQT) the chain is Cytoplasmic. The chain crosses the membrane as a helical span at residues 59 to 80 (PMYFFLSFLSLTDICFTTSVVP). The Extracellular segment spans residues 81 to 101 (KMLMNFLSEKKTISYAGCLTQ). Cysteine 98 and cysteine 190 are joined by a disulfide. Residues 102-121 (MYFLYALGNSDSCLLAVMAF) traverse the membrane as a helical segment. The Cytoplasmic portion of the chain corresponds to 122–140 (DRYVAVCDPFHYVTTMSHH). Residues 141–159 (HCVLLVAFSCSFPHLHSLL) traverse the membrane as a helical segment. Topologically, residues 160-197 (HTLLLNRLTFCDSNVIHHFLCDLSPVLKLSCSSIFVNE) are extracellular. A helical membrane pass occupies residues 198-220 (IVQMTEAPIVLVTRFLCIAFSYI). At 221–237 (RILTTVLKIPSTSGKRK) the chain is on the cytoplasmic side. The chain crosses the membrane as a helical span at residues 238–260 (AFSTCGFYLTVVTLFYGSIFCVY). The Extracellular portion of the chain corresponds to 261–272 (LQPPSTYAVKDH). The helical transmembrane segment at 273-292 (VATIVYTVLSSMLNPFIYSL) threads the bilayer. Over 293–309 (RNKDLKQGLRKLMSKRS) the chain is Cytoplasmic.

This sequence belongs to the G-protein coupled receptor 1 family.

The protein resides in the cell membrane. Functionally, odorant receptor. The sequence is that of Olfactory receptor 1L8 (OR1L8) from Homo sapiens (Human).